The following is a 1036-amino-acid chain: Ephrin type-A receptor 6 (1036 aa).

An N-terminal signal peptide occupies residues 1-22 (MGGCEVREFLLQFGFFLPLLTA). Topologically, residues 23 to 550 (WPGDCSHVSN…MAAEQGQILV (528 aa)) are extracellular. The region spanning 34-212 (QVVLLDTTTV…FYKKCPFTVR (179 aa)) is the Eph LBD domain. Fibronectin type-III domains follow at residues 331–441 (PPSA…TDQD) and 442–537 (APSL…TGDE). Asn343, Asn397, and Asn410 each carry an N-linked (GlcNAc...) asparagine glycan. The helical transmembrane segment at 551-571 (IATAAVGGFTLLVILTLFFLI) threads the bilayer. The Cytoplasmic segment spans residues 572–1036 (TGRCQWYIKA…MHIQEKGFHV (465 aa)). Phosphotyrosine; by autocatalysis is present on residues Tyr606 and Tyr612. Positions 631–944 (IRIERVIGAG…RNPSALHTLV (314 aa)) constitute a Protein kinase domain. Residues 637–645 (IGAGEFGEV) and Lys663 each bind ATP. Asp798 serves as the catalytic Proton acceptor. 2 positions are modified to phosphotyrosine; by autocatalysis: Tyr831 and Tyr978. The SAM domain occupies 961–1025 (PLFVTVGDWL…VSSIQTLRLH (65 aa)). The PDZ-binding motif lies at 1034 to 1036 (FHV).

Belongs to the protein kinase superfamily. Tyr protein kinase family. Ephrin receptor subfamily. Heterotetramer upon binding of the ligand. The heterotetramer is composed of an ephrin dimer and a receptor dimer. Oligomerization is probably required to induce biological responses. Interacts (via SAM domain) with ANKS1A (via SAM domain). Expressed in brain and testis.

The protein resides in the membrane. The enzyme catalyses L-tyrosyl-[protein] + ATP = O-phospho-L-tyrosyl-[protein] + ADP + H(+). Functionally, receptor tyrosine kinase which binds promiscuously GPI-anchored ephrin-A family ligands residing on adjacent cells, leading to contact-dependent bidirectional signaling into neighboring cells. The signaling pathway downstream of the receptor is referred to as forward signaling while the signaling pathway downstream of the ephrin ligand is referred to as reverse signaling. This Homo sapiens (Human) protein is Ephrin type-A receptor 6 (EPHA6).